Consider the following 382-residue polypeptide: Putative NADPH dehydrogenase C5H10.04 (382 aa).

Positions 28 and 189 each coordinate FMN. Positions 189 and 192 each coordinate substrate. 2 residues coordinate FMN: Arg-242 and Arg-334. Tyr-361 lines the substrate pocket.

Belongs to the NADH:flavin oxidoreductase/NADH oxidase family. As to quaternary structure, homodimer or heterodimer. It depends on FMN as a cofactor.

It catalyses the reaction A + NADPH + H(+) = AH2 + NADP(+). The sequence is that of Putative NADPH dehydrogenase C5H10.04 from Schizosaccharomyces pombe (strain 972 / ATCC 24843) (Fission yeast).